Reading from the N-terminus, the 124-residue chain is Large ribosomal subunit protein uL18 (124 aa).

It belongs to the universal ribosomal protein uL18 family. Part of the 50S ribosomal subunit; part of the 5S rRNA/L5/L18/L25 subcomplex. Contacts the 5S and 23S rRNAs.

In terms of biological role, this is one of the proteins that bind and probably mediate the attachment of the 5S RNA into the large ribosomal subunit, where it forms part of the central protuberance. The chain is Large ribosomal subunit protein uL18 from Caldicellulosiruptor saccharolyticus (strain ATCC 43494 / DSM 8903 / Tp8T 6331).